The following is a 154-amino-acid chain: Endoribonuclease YbeY (154 aa).

Zn(2+) contacts are provided by histidine 114, histidine 118, and histidine 124.

Belongs to the endoribonuclease YbeY family. The cofactor is Zn(2+).

It is found in the cytoplasm. Its function is as follows. Single strand-specific metallo-endoribonuclease involved in late-stage 70S ribosome quality control and in maturation of the 3' terminus of the 16S rRNA. This is Endoribonuclease YbeY from Haemophilus influenzae (strain ATCC 51907 / DSM 11121 / KW20 / Rd).